The sequence spans 201 residues: 3-isopropylmalate dehydratase small subunit (201 aa).

The protein belongs to the LeuD family. LeuD type 1 subfamily. Heterodimer of LeuC and LeuD.

It carries out the reaction (2R,3S)-3-isopropylmalate = (2S)-2-isopropylmalate. Its pathway is amino-acid biosynthesis; L-leucine biosynthesis; L-leucine from 3-methyl-2-oxobutanoate: step 2/4. Functionally, catalyzes the isomerization between 2-isopropylmalate and 3-isopropylmalate, via the formation of 2-isopropylmaleate. The protein is 3-isopropylmalate dehydratase small subunit of Methylorubrum extorquens (strain CM4 / NCIMB 13688) (Methylobacterium extorquens).